The chain runs to 353 residues: Photosystem II protein D1 (353 aa).

Threonine 2 bears the N-acetylthreonine mark. A Phosphothreonine modification is found at threonine 2. Transmembrane regions (helical) follow at residues 29–46, 118–133, and 142–156; these read YIGW…TATS, HFLL…EWEL, and WIAV…AATA. Chlorophyll a is bound at residue histidine 118. A pheophytin a-binding site is contributed by tyrosine 126. Residues aspartate 170 and glutamate 189 each coordinate [CaMn4O5] cluster. A helical membrane pass occupies residues 197-218; it reads FHMLGVAGVFGGSLFSAMHGSL. Histidine 198 contributes to the chlorophyll a binding site. A quinone-binding positions include histidine 215 and 264-265; that span reads SF. Fe cation is bound at residue histidine 215. Histidine 272 lines the Fe cation pocket. The chain crosses the membrane as a helical span at residues 274–288; it reads FLAAWPVVGIWFTAL. Residues histidine 332, glutamate 333, aspartate 342, and alanine 344 each contribute to the [CaMn4O5] cluster site. A propeptide spanning residues 345–353 is cleaved from the precursor; it reads AVEAPSING.

It belongs to the reaction center PufL/M/PsbA/D family. PSII is composed of 1 copy each of membrane proteins PsbA, PsbB, PsbC, PsbD, PsbE, PsbF, PsbH, PsbI, PsbJ, PsbK, PsbL, PsbM, PsbT, PsbX, PsbY, PsbZ, Psb30/Ycf12, at least 3 peripheral proteins of the oxygen-evolving complex and a large number of cofactors. It forms dimeric complexes. Requires The D1/D2 heterodimer binds P680, chlorophylls that are the primary electron donor of PSII, and subsequent electron acceptors. It shares a non-heme iron and each subunit binds pheophytin, quinone, additional chlorophylls, carotenoids and lipids. D1 provides most of the ligands for the Mn4-Ca-O5 cluster of the oxygen-evolving complex (OEC). There is also a Cl(-1) ion associated with D1 and D2, which is required for oxygen evolution. The PSII complex binds additional chlorophylls, carotenoids and specific lipids. as cofactor. In terms of processing, tyr-161 forms a radical intermediate that is referred to as redox-active TyrZ, YZ or Y-Z. C-terminally processed by CTPA; processing is essential to allow assembly of the oxygen-evolving complex and thus photosynthetic growth.

The protein localises to the plastid. Its subcellular location is the chloroplast thylakoid membrane. The catalysed reaction is 2 a plastoquinone + 4 hnu + 2 H2O = 2 a plastoquinol + O2. In terms of biological role, photosystem II (PSII) is a light-driven water:plastoquinone oxidoreductase that uses light energy to abstract electrons from H(2)O, generating O(2) and a proton gradient subsequently used for ATP formation. It consists of a core antenna complex that captures photons, and an electron transfer chain that converts photonic excitation into a charge separation. The D1/D2 (PsbA/PsbD) reaction center heterodimer binds P680, the primary electron donor of PSII as well as several subsequent electron acceptors. The sequence is that of Photosystem II protein D1 from Lotus japonicus (Lotus corniculatus var. japonicus).